A 129-amino-acid polypeptide reads, in one-letter code: Large ribosomal subunit protein bL20 (129 aa).

This sequence belongs to the bacterial ribosomal protein bL20 family.

Functionally, binds directly to 23S ribosomal RNA and is necessary for the in vitro assembly process of the 50S ribosomal subunit. It is not involved in the protein synthesizing functions of that subunit. The chain is Large ribosomal subunit protein bL20 from Mycobacterium leprae (strain Br4923).